We begin with the raw amino-acid sequence, 438 residues long: Histidinol dehydrogenase (438 aa).

NAD(+)-binding residues include Y135, Q193, and N216. Positions 243, 265, and 268 each coordinate substrate. The Zn(2+) site is built by Q265 and H268. Residues E332 and H333 each act as proton acceptor in the active site. Substrate-binding residues include H333, D366, E420, and H425. Position 366 (D366) interacts with Zn(2+). H425 is a binding site for Zn(2+).

It belongs to the histidinol dehydrogenase family. Zn(2+) is required as a cofactor.

The enzyme catalyses L-histidinol + 2 NAD(+) + H2O = L-histidine + 2 NADH + 3 H(+). It functions in the pathway amino-acid biosynthesis; L-histidine biosynthesis; L-histidine from 5-phospho-alpha-D-ribose 1-diphosphate: step 9/9. In terms of biological role, catalyzes the sequential NAD-dependent oxidations of L-histidinol to L-histidinaldehyde and then to L-histidine. The polypeptide is Histidinol dehydrogenase (Shewanella oneidensis (strain ATCC 700550 / JCM 31522 / CIP 106686 / LMG 19005 / NCIMB 14063 / MR-1)).